The primary structure comprises 379 residues: UDP-N-acetylglucosamine--N-acetylmuramyl-(pentapeptide) pyrophosphoryl-undecaprenol N-acetylglucosamine transferase (379 aa).

UDP-N-acetyl-alpha-D-glucosamine is bound by residues 17–19 (TGG), N128, R169, S197, and Q298.

Belongs to the glycosyltransferase 28 family. MurG subfamily.

The protein resides in the cell inner membrane. It catalyses the reaction di-trans,octa-cis-undecaprenyl diphospho-N-acetyl-alpha-D-muramoyl-L-alanyl-D-glutamyl-meso-2,6-diaminopimeloyl-D-alanyl-D-alanine + UDP-N-acetyl-alpha-D-glucosamine = di-trans,octa-cis-undecaprenyl diphospho-[N-acetyl-alpha-D-glucosaminyl-(1-&gt;4)]-N-acetyl-alpha-D-muramoyl-L-alanyl-D-glutamyl-meso-2,6-diaminopimeloyl-D-alanyl-D-alanine + UDP + H(+). It participates in cell wall biogenesis; peptidoglycan biosynthesis. In terms of biological role, cell wall formation. Catalyzes the transfer of a GlcNAc subunit on undecaprenyl-pyrophosphoryl-MurNAc-pentapeptide (lipid intermediate I) to form undecaprenyl-pyrophosphoryl-MurNAc-(pentapeptide)GlcNAc (lipid intermediate II). This is UDP-N-acetylglucosamine--N-acetylmuramyl-(pentapeptide) pyrophosphoryl-undecaprenol N-acetylglucosamine transferase from Brucella melitensis biotype 2 (strain ATCC 23457).